Here is a 298-residue protein sequence, read N- to C-terminus: Lipoyl synthase (298 aa).

[4Fe-4S] cluster contacts are provided by Cys40, Cys45, Cys51, Cys67, Cys71, Cys74, and Ser280. Residues 53–269 form the Radical SAM core domain; sequence AVRKTATFMI…KEIALSKGFS (217 aa).

It belongs to the radical SAM superfamily. Lipoyl synthase family. [4Fe-4S] cluster serves as cofactor.

The protein localises to the cytoplasm. It carries out the reaction [[Fe-S] cluster scaffold protein carrying a second [4Fe-4S](2+) cluster] + N(6)-octanoyl-L-lysyl-[protein] + 2 oxidized [2Fe-2S]-[ferredoxin] + 2 S-adenosyl-L-methionine + 4 H(+) = [[Fe-S] cluster scaffold protein] + N(6)-[(R)-dihydrolipoyl]-L-lysyl-[protein] + 4 Fe(3+) + 2 hydrogen sulfide + 2 5'-deoxyadenosine + 2 L-methionine + 2 reduced [2Fe-2S]-[ferredoxin]. The protein operates within protein modification; protein lipoylation via endogenous pathway; protein N(6)-(lipoyl)lysine from octanoyl-[acyl-carrier-protein]. Catalyzes the radical-mediated insertion of two sulfur atoms into the C-6 and C-8 positions of the octanoyl moiety bound to the lipoyl domains of lipoate-dependent enzymes, thereby converting the octanoylated domains into lipoylated derivatives. This chain is Lipoyl synthase, found in Bacillus cereus (strain B4264).